Here is a 156-residue protein sequence, read N- to C-terminus: Oxidized purine nucleoside triphosphate hydrolase (156 aa).

Residues 3–132 (TSRLYTLVLV…WFPLLLQKKK (130 aa)) enclose the Nudix hydrolase domain. Thr8 provides a ligand contact to 2-oxo-dATP. Residues Thr8, Lys23, Asn33, 35 to 38 (FGGK), and Glu52 each bind 8-oxo-dGTP. Residues Asn33 and 35-38 (FGGK) contribute to the 2-oxo-dATP site. Residues Gly36, Glu52, Glu55, Glu56, and Glu100 each coordinate Mg(2+). Positions 37-58 (GKVQEGETIEDGAKRELLEESG) match the Nudix box motif. 8-oxo-dGTP contacts are provided by residues Glu56, Glu100, and 117–120 (WPDD). Residue 117–120 (WPDD) coordinates 2-oxo-dATP.

Belongs to the Nudix hydrolase family. In terms of assembly, monomer. Mg(2+) serves as cofactor. As to expression, high expression levels detected in thymus, liver, spleen, kidney, testis and large intestine, with lower levels detected in brain, heart, lung and stomach (at protein level). Expressed in kidney, liver and small intestine.

It localises to the cytoplasm. The protein resides in the nucleus. It is found in the nucleus membrane. The protein localises to the cytoplasmic vesicle. Its subcellular location is the secretory vesicle. It localises to the acrosome. The catalysed reaction is 2-oxo-dATP + H2O = 2-oxo-dAMP + diphosphate + H(+). It catalyses the reaction 2-oxo-ATP + H2O = 2-oxo-AMP + diphosphate + H(+). The enzyme catalyses 8-oxo-dGTP + H2O = 8-oxo-dGMP + diphosphate + H(+). It carries out the reaction 8-oxo-dATP + H2O = 8-oxo-dAMP + diphosphate + H(+). The catalysed reaction is O(6)-methyl-dGTP + H2O = O(6)-methyl-dGMP + diphosphate + H(+). It catalyses the reaction N(6)-methyl-dATP + H2O = N(6)-methyl-dAMP + diphosphate + H(+). The enzyme catalyses N(6)-methyl-ATP + H2O = N(6)-methyl-AMP + diphosphate + H(+). Its function is as follows. Oxidized purine nucleoside triphosphate hydrolase which is a prominent sanitizer of the oxidized nucleotide pool. Catalyzes the hydrolysis of 2-oxo-dATP (2-hydroxy-dATP) into 2-oxo-dAMP. Also has a significant hydrolase activity toward 2-oxo-ATP, 8-oxo-dGTP and 8-oxo-dATP. Through the hydrolysis of oxidized purine nucleoside triphosphates, prevents their incorporation into DNA and the subsequent transversions A:T to C:G and G:C to T:A. Also catalyzes the hydrolysis of methylated purine nucleoside triphosphate preventing their integration into DNA. Through this antimutagenic activity protects cells from oxidative stress. This chain is Oxidized purine nucleoside triphosphate hydrolase (Nudt1), found in Mus musculus (Mouse).